Consider the following 48-residue polypeptide: Bacteriocin plantaricin-A (48 aa).

A propeptide spanning residues 1–25 (MKIQIKGMKQLSNKEMQKIVGGKSS) is cleaved from the precursor.

In terms of assembly, active plantaricin A is composed of an alpha chain and a beta chain.

Functionally, this heat stable bacteriocin inhibits the growth of closely related Lactobacillus species. It may act as a pore-forming protein, creating a channel in the cell membrane through a 'barrel stave' mechanism. The sequence is that of Bacteriocin plantaricin-A (plnA) from Lactiplantibacillus plantarum (strain ATCC BAA-793 / NCIMB 8826 / WCFS1) (Lactobacillus plantarum).